The chain runs to 375 residues: Carbamoyl phosphate synthase small chain (375 aa).

Residues 1-184 (MVSLYLENGL…LDYKPFDEKI (184 aa)) are CPSase. 3 residues coordinate L-glutamine: S44, G240, and G242. A Glutamine amidotransferase type-1 domain is found at 188-375 (IIAVLDFGAK…KEFVGLLEGF (188 aa)). C268 serves as the catalytic Nucleophile. Residues L269, Q272, N310, and Y313 each coordinate L-glutamine. Active-site residues include H351 and E353.

The protein belongs to the CarA family. Composed of two chains; the small (or glutamine) chain promotes the hydrolysis of glutamine to ammonia, which is used by the large (or ammonia) chain to synthesize carbamoyl phosphate. Tetramer of heterodimers (alpha,beta)4.

It carries out the reaction hydrogencarbonate + L-glutamine + 2 ATP + H2O = carbamoyl phosphate + L-glutamate + 2 ADP + phosphate + 2 H(+). It catalyses the reaction L-glutamine + H2O = L-glutamate + NH4(+). Its pathway is amino-acid biosynthesis; L-arginine biosynthesis; carbamoyl phosphate from bicarbonate: step 1/1. It functions in the pathway pyrimidine metabolism; UMP biosynthesis via de novo pathway; (S)-dihydroorotate from bicarbonate: step 1/3. Its function is as follows. Small subunit of the glutamine-dependent carbamoyl phosphate synthetase (CPSase). CPSase catalyzes the formation of carbamoyl phosphate from the ammonia moiety of glutamine, carbonate, and phosphate donated by ATP, constituting the first step of 2 biosynthetic pathways, one leading to arginine and/or urea and the other to pyrimidine nucleotides. The small subunit (glutamine amidotransferase) binds and cleaves glutamine to supply the large subunit with the substrate ammonia. This Helicobacter pylori (strain J99 / ATCC 700824) (Campylobacter pylori J99) protein is Carbamoyl phosphate synthase small chain.